Consider the following 100-residue polypeptide: Integration host factor subunit beta (100 aa).

Belongs to the bacterial histone-like protein family. As to quaternary structure, heterodimer of an alpha and a beta chain.

Its function is as follows. This protein is one of the two subunits of integration host factor, a specific DNA-binding protein that functions in genetic recombination as well as in transcriptional and translational control. The sequence is that of Integration host factor subunit beta from Agrobacterium fabrum (strain C58 / ATCC 33970) (Agrobacterium tumefaciens (strain C58)).